A 303-amino-acid polypeptide reads, in one-letter code: Putative S-adenosyl-L-methionine-dependent methyltransferase MSMEG_1479/MSMEI_1443 (303 aa).

Residues Asp-130 and 159–160 contribute to the S-adenosyl-L-methionine site; that span reads DL.

This sequence belongs to the UPF0677 family.

Its function is as follows. Exhibits S-adenosyl-L-methionine-dependent methyltransferase activity. The chain is Putative S-adenosyl-L-methionine-dependent methyltransferase MSMEG_1479/MSMEI_1443 from Mycolicibacterium smegmatis (strain ATCC 700084 / mc(2)155) (Mycobacterium smegmatis).